The following is a 303-amino-acid chain: Serine/threonine-protein phosphatase PP-X homolog 1 (303 aa).

D51, H53, D79, and N111 together coordinate Mn(2+). Residue H112 is the Proton donor of the active site. Mn(2+) contacts are provided by H161 and H235.

It belongs to the PPP phosphatase family. PP-4 (PP-X) subfamily. The cofactor is Mn(2+).

The enzyme catalyses O-phospho-L-seryl-[protein] + H2O = L-seryl-[protein] + phosphate. It carries out the reaction O-phospho-L-threonyl-[protein] + H2O = L-threonyl-[protein] + phosphate. This chain is Serine/threonine-protein phosphatase PP-X homolog 1 (Ppx1), found in Paramecium tetraurelia.